The sequence spans 1671 residues: Fatty acid synthase alpha subunit aflA (1671 aa).

The interval 40–60 (ITEEAPTEQPPLSTPPSLPQT) is disordered. Residues 47–58 (EQPPLSTPPSLP) show a composition bias toward pro residues. A Carrier domain is found at 75 to 153 (DVALSRVQIV…DANPTVQLGK (79 aa)). Ser113 carries the O-(pantetheine 4'-phosphoryl)serine modification. The segment at 492–729 (GKTFLVTGAG…AMLLTPDFVA (238 aa)) is ketoreductase (KR) domain. The 503-residue stretch at 926–1428 (MEVLQEVAVE…QKGGQVVGVA (503 aa)) folds into the Ketosynthase family 3 (KS3) domain. The For beta-ketoacyl synthase activity role is filled by Cys1113. The segment covering 1244–1270 (SMISVTSRPSSRSSTSSEVSDKSSLTS) has biased composition (low complexity). Residues 1244–1288 (SMISVTSRPSSRSSTSSEVSDKSSLTSITSISNPAPRAQRARSTT) are disordered. Catalysis depends on for beta-ketoacyl synthase activity residues His1313 and His1354. The disordered stretch occupies residues 1497-1521 (PSTGQYRFRSDATPALDDDALPPPG). Asp1552 contacts Mg(2+). Acetyl-CoA-binding positions include 1552 to 1554 (DLV), 1598 to 1608 (EAVFKCLQTHS), 1622 to 1625 (HGGN), and 1652 to 1654 (ISY). Position 1653 (Ser1653) interacts with Mg(2+).

The protein belongs to the thiolase-like superfamily. Fungal fatty acid synthetase subunit alpha family. In terms of assembly, [Alpha(6)beta(6)] hexamers of two multifunctional subunits (alpha and beta). In terms of processing, 4'-phosphopantetheine is transferred from CoA to a specific serine of the acyl carrier domain by the C-terminal PPT domain. This modification is essential for activity because fatty acids are bound in thioester linkage to the sulfhydryl of the prosthetic group.

It catalyses the reaction acetyl-CoA + n malonyl-CoA + 2n NADPH + 4n H(+) = a long-chain-acyl-CoA + n CoA + n CO2 + 2n NADP(+).. The catalysed reaction is a fatty acyl-[ACP] + malonyl-[ACP] + H(+) = a 3-oxoacyl-[ACP] + holo-[ACP] + CO2. It carries out the reaction a (3R)-hydroxyacyl-[ACP] + NADP(+) = a 3-oxoacyl-[ACP] + NADPH + H(+). Its pathway is mycotoxin biosynthesis; aflatoxin biosynthesis. In terms of biological role, fatty acid synthase alpha subunit; part of the gene cluster that mediates the biosynthesis of aflatoxins, a group of polyketide-derived furanocoumarins, and part of the most toxic and carcinogenic compounds among the known mycotoxins. The four major aflatoxins produced by A.parasiticus are aflatoxin B1 (AFB1), aflatoxin B2 (AFB2), aflatoxin G1 (AFG1) and aflatoxin G2 (AFG2). Within the aflatoxin pathway, the fungal fatty acid synthase aflA/aflB provides the hexanoyl starter unit to the acyl-carrier protein (ACP) domain of the norsolorinic acid synthase to allow the first step of the pathway. The biosynthesis of aflatoxins begins with the norsolorinic acid synthase aflC that combines a hexanoyl starter unit produced by the fatty acid synthase aflA/aflB and 7 malonyl-CoA extender units to synthesize the precursor NOR. The second step is the conversion of NOR to averantin (AVN) and requires the norsolorinic acid ketoreductase aflD, which catalyzes the dehydration of norsolorinic acid to form (1'S)-averantin. The norsolorinic acid reductases aflE and aflF may also play a role in the conversion of NOR to AVN. The cytochrome P450 monooxygenase aflG then catalyzes the hydroxylation of AVN to 5'hydroxyaverantin (HAVN). The next step is performed by the 5'-hydroxyaverantin dehydrogenase aflH that transforms HAVN to 5'-oxoaverantin (OAVN) which is further converted to averufin (AVF) by aflK that plays a dual role in the pathway, as a 5'-oxoaverantin cyclase that mediates conversion of 5'-oxoaverantin, as well as a versicolorin B synthase in a later step in the pathway. The averufin oxidase aflI catalyzes the conversion of AVF to versiconal hemiacetal acetate (VHA). VHA is then the substrate for the versiconal hemiacetal acetate esterase aflJ to yield versiconal (VAL). Versicolorin B synthase aflK then converts VAL to versicolorin B (VERB) by closing the bisfuran ring of aflatoxin which is required for DNA-binding, thus giving to aflatoxin its activity as a mutagen. Then, the activity of the versicolorin B desaturase aflL leads to versicolorin A (VERA). A branch point starts from VERB since it can also be converted to dihydrodemethylsterigmatocystin (DMDHST), probably also by aflL, VERA being a precursor for aflatoxins B1 and G1, and DMDHST for aflatoxins B2 and G2. Next, the versicolorin reductase aflM and the cytochrome P450 monooxygenase aflN are involved in conversion of VERA to demethylsterigmatocystin (DMST). AflX and aflY seem also involved in this step, through probable aflX-mediated epoxide ring-opening step following versicolorin A oxidation and aflY-mediated Baeyer-Villiger oxidation required for the formation of the xanthone ring. The methyltransferase aflO then leads to the modification of DMST to sterigmatocystin (ST), and of DMDHST to dihydrosterigmatocystin (DHST). Both ST and DHST are then substrates of the O-methyltransferase aflP to yield O-methylsterigmatocystin (OMST) and dihydro-O-methylsterigmatocystin (DHOMST), respectively. Finally OMST is converted to aflatoxins B1 and G1, and DHOMST to aflatoxins B2 and G2, via the action of several enzymes including O-methylsterigmatocystin oxidoreductase aflQ, the cytochrome P450 monooxygenase aflU, but also the NADH-dependent flavin oxidoreductase nadA which is specifically required for the synthesis of AFG1. The sequence is that of Fatty acid synthase alpha subunit aflA from Aspergillus parasiticus (strain ATCC 56775 / NRRL 5862 / SRRC 143 / SU-1).